A 206-amino-acid polypeptide reads, in one-letter code: Probable 5-formyltetrahydrofolate cyclo-ligase (206 aa).

ATP is bound by residues 8–12 (KSELR) and Arg12. Residues Val54, Glu59, and 146-150 (HGKGY) each bind substrate. 143–151 (RCGHGKGYY) is an ATP binding site. Asp152 and Asp188 together coordinate Mg(2+).

It belongs to the 5-formyltetrahydrofolate cyclo-ligase family. In terms of assembly, monomer. Mg(2+) serves as cofactor.

The protein resides in the cytoplasm. It carries out the reaction (6S)-5-formyl-5,6,7,8-tetrahydrofolate + ATP = (6R)-5,10-methenyltetrahydrofolate + ADP + phosphate. Functionally, contributes to tetrahydrofolate metabolism. Helps regulate carbon flow through the folate-dependent one-carbon metabolic network that supplies carbon for the biosynthesis of purines, thymidine and amino acids. Catalyzes the irreversible conversion of 5-formyltetrahydrofolate (5-CHO-H(4)PteGlu) to yield 5,10-methenyltetrahydrofolate. The chain is Probable 5-formyltetrahydrofolate cyclo-ligase from Caenorhabditis elegans.